A 1394-amino-acid chain; its full sequence is Coiled-coil domain-containing protein 7 (1394 aa).

Residues 308 to 340 (LLDAEYKQIQRDFELLSEEKLVLENELQKLKDT) adopt a coiled-coil conformation. The segment at 345–375 (STNNRTKKAAKTVKKKDKGKSEDSEKKMSSE) is disordered. A compositionally biased stretch (basic residues) spans 349-362 (RTKKAAKTVKKKDK). Over residues 363–375 (GKSEDSEKKMSSE) the composition is skewed to basic and acidic residues. Residues 383-421 (LDQVQKVARLEIENKVLQEQLKQALQEAEKAKHQLNYFL) are a coiled coil. Disordered stretches follow at residues 431–617 (EGKT…EVPD), 634–806 (EQMK…LEHQ), and 819–842 (NEKL…PMLK). A compositionally biased stretch (polar residues) spans 437–446 (TMRVGNSQTE). A compositionally biased stretch (basic and acidic residues) spans 447-462 (VKGEDSKTIPLEKETG). Over residues 464 to 473 (SLVSDSGGQK) the composition is skewed to polar residues. Residues 491–500 (LIEKSSEKKR) are compositionally biased toward basic and acidic residues. 3 stretches are compositionally biased toward polar residues: residues 503–513 (PAISDLSQILK), 521–538 (LESS…NKSP), and 546–571 (LTTV…NETV). Residues 583–600 (ESKKADVSEEQLQKKTEE) show a composition bias toward basic and acidic residues. The segment covering 663 to 679 (SRSQSETKNLEATGNES) has biased composition (polar residues). Basic and acidic residues predominate over residues 695–707 (QDTKSKTEVEVKK). The span at 711–721 (FQDNQLNTHNE) shows a compositional bias: polar residues. Basic and acidic residues predominate over residues 722–736 (VPNERLIVEHQESMS). Polar residues predominate over residues 780–790 (KEQSTLKGQRI). 2 stretches are compositionally biased toward basic and acidic residues: residues 791–806 (TTHE…LEHQ) and 830–842 (THGE…PMLK).

Its function is as follows. May play a role in tumorigenesis. This chain is Coiled-coil domain-containing protein 7 (CCDC7), found in Macaca fascicularis (Crab-eating macaque).